Reading from the N-terminus, the 220-residue chain is MNYNSLFDHTLLRADASVEEIKQLCDEAVKFNFFSVCVNPSYVPYVKEQLHNSSVKICTVVGFPLGQTSTKQKVYETKIAIKEGADEIDMVLNISEFKENCACVVNEIRKYKKVCKKKILKVIVETALLSENEIEKATLVVIDGGADFIKTSTGFSSRGASIKDIEIMKNVIEKNNSKLKIKASGGIKTLTFVEELIKAGAERIGSSKSVEIIKETLNKN.

The active-site Proton donor/acceptor is aspartate 89. Residue lysine 150 is the Schiff-base intermediate with acetaldehyde of the active site. Residue lysine 182 is the Proton donor/acceptor of the active site.

This sequence belongs to the DeoC/FbaB aldolase family. DeoC type 1 subfamily.

It is found in the cytoplasm. It carries out the reaction 2-deoxy-D-ribose 5-phosphate = D-glyceraldehyde 3-phosphate + acetaldehyde. The protein operates within carbohydrate degradation; 2-deoxy-D-ribose 1-phosphate degradation; D-glyceraldehyde 3-phosphate and acetaldehyde from 2-deoxy-alpha-D-ribose 1-phosphate: step 2/2. Catalyzes a reversible aldol reaction between acetaldehyde and D-glyceraldehyde 3-phosphate to generate 2-deoxy-D-ribose 5-phosphate. This chain is Deoxyribose-phosphate aldolase, found in Mycoplasmoides pirum (Mycoplasma pirum).